Consider the following 346-residue polypeptide: tRNA N6-adenosine threonylcarbamoyltransferase (346 aa).

2 residues coordinate Fe cation: H117 and H121. Substrate-binding positions include 139 to 143, D172, G185, D189, and N278; that span reads VVSGG. Position 307 (D307) interacts with Fe cation.

This sequence belongs to the KAE1 / TsaD family. In terms of assembly, may form a heterodimer with TsaB. Fe(2+) serves as cofactor.

The protein resides in the cytoplasm. It carries out the reaction L-threonylcarbamoyladenylate + adenosine(37) in tRNA = N(6)-L-threonylcarbamoyladenosine(37) in tRNA + AMP + H(+). Required for the formation of a threonylcarbamoyl group on adenosine at position 37 (t(6)A37) in tRNAs that read codons beginning with adenine. Is involved in the transfer of the threonylcarbamoyl moiety of threonylcarbamoyl-AMP (TC-AMP) to the N6 group of A37, together with TsaE and TsaB; this reaction does not require ATP in vitro. TsaD likely plays a direct catalytic role in this reaction. This is tRNA N6-adenosine threonylcarbamoyltransferase from Bacillus subtilis (strain 168).